The primary structure comprises 301 residues: Lipoyl synthase (301 aa).

[4Fe-4S] cluster contacts are provided by Cys-53, Cys-58, Cys-64, Cys-79, Cys-83, Cys-86, and Ser-290. In terms of domain architecture, Radical SAM core spans 65-279; the sequence is WSRKTATYML…RIYGKSIGFK (215 aa).

The protein belongs to the radical SAM superfamily. Lipoyl synthase family. The cofactor is [4Fe-4S] cluster.

Its subcellular location is the cytoplasm. It catalyses the reaction [[Fe-S] cluster scaffold protein carrying a second [4Fe-4S](2+) cluster] + N(6)-octanoyl-L-lysyl-[protein] + 2 oxidized [2Fe-2S]-[ferredoxin] + 2 S-adenosyl-L-methionine + 4 H(+) = [[Fe-S] cluster scaffold protein] + N(6)-[(R)-dihydrolipoyl]-L-lysyl-[protein] + 4 Fe(3+) + 2 hydrogen sulfide + 2 5'-deoxyadenosine + 2 L-methionine + 2 reduced [2Fe-2S]-[ferredoxin]. Its pathway is protein modification; protein lipoylation via endogenous pathway; protein N(6)-(lipoyl)lysine from octanoyl-[acyl-carrier-protein]: step 2/2. Functionally, catalyzes the radical-mediated insertion of two sulfur atoms into the C-6 and C-8 positions of the octanoyl moiety bound to the lipoyl domains of lipoate-dependent enzymes, thereby converting the octanoylated domains into lipoylated derivatives. This chain is Lipoyl synthase, found in Leptospira interrogans serogroup Icterohaemorrhagiae serovar copenhageni (strain Fiocruz L1-130).